The following is a 246-amino-acid chain: Uridylate kinase (246 aa).

20–23 is an ATP binding site; the sequence is KISG. The tract at residues 28–33 is involved in allosteric activation by GTP; the sequence is GDQGYG. Glycine 62 contacts UMP. Positions 63 and 67 each coordinate ATP. Residues aspartate 82 and 143 to 150 each bind UMP; that span reads TGNPYFTT. 3 residues coordinate ATP: threonine 170, tyrosine 176, and aspartate 179.

The protein belongs to the UMP kinase family. In terms of assembly, homohexamer.

It is found in the cytoplasm. It catalyses the reaction UMP + ATP = UDP + ADP. It participates in pyrimidine metabolism; CTP biosynthesis via de novo pathway; UDP from UMP (UMPK route): step 1/1. With respect to regulation, allosterically activated by GTP. Inhibited by UTP. Functionally, catalyzes the reversible phosphorylation of UMP to UDP. In Cereibacter sphaeroides (strain ATCC 17025 / ATH 2.4.3) (Rhodobacter sphaeroides), this protein is Uridylate kinase.